We begin with the raw amino-acid sequence, 659 residues long: mRNA export factor ICP27 homolog (659 aa).

4 residues coordinate Zn(2+): Cys130, His266, Cys268, and Cys273. The CHC2-type zinc-finger motif lies at 130-273 (CMMSNGERPP…CEHACNDNAC (144 aa)). Residues 317-659 (GSFDDSRSAT…GEDGESDMTL (343 aa)) form a disordered region. Residues 324 to 336 (SATSGDGSSCSSA) show a composition bias toward low complexity. Polar residues predominate over residues 354-365 (SDQTDTSNNGTV). A compositionally biased stretch (basic and acidic residues) spans 387–397 (SPLDRPNDYHY). Residues 413–427 (GSGSSSTEAVSTASA) are compositionally biased toward low complexity. The segment covering 483-499 (SPERRSSEERSSSDQRR) has biased composition (basic and acidic residues). The segment covering 503–513 (LSRSASATSGG) has biased composition (polar residues). Residues 553-575 (SRSNTPPSSPSKPDSAPAASASP) are compositionally biased toward low complexity. Over residues 598–610 (ESVRVSERFETGD) the composition is skewed to basic and acidic residues. Acidic residues-rich tracts occupy residues 617-628 (ETEDESDDEDDQ) and 646-659 (SETDGEDGESDMTL).

This sequence belongs to the HHV-1 ICP27 protein family.

It is found in the virion tegument. The protein resides in the virion. The protein localises to the host nucleus. It localises to the host cytoplasm. Functionally, immediate early (EI) protein that plays many roles during productive infection including regulation of viral gene expression and nuclear export of intronless viral RNAs. The chain is mRNA export factor ICP27 homolog from Elephantid herpesvirus 1 (isolate Asian elephant/Berlin/Kiba/1998) (EIHV-1).